We begin with the raw amino-acid sequence, 26 residues long: ATP synthase subunit gamma, mitochondrial (26 aa).

This sequence belongs to the ATPase gamma chain family. In terms of assembly, F-type ATPases have 2 components, CF(1) - the catalytic core - and CF(0) - the membrane proton channel. CF(1) has five subunits: alpha(3), beta(3), gamma(1), delta(1), epsilon(1). CF(0) has three main subunits: a, b and c.

It is found in the mitochondrion. The protein resides in the mitochondrion inner membrane. Mitochondrial membrane ATP synthase (F(1)F(0) ATP synthase or Complex V) produces ATP from ADP in the presence of a proton gradient across the membrane which is generated by electron transport complexes of the respiratory chain. F-type ATPases consist of two structural domains, F(1) - containing the extramembraneous catalytic core, and F(0) - containing the membrane proton channel, linked together by a central stalk and a peripheral stalk. During catalysis, ATP synthesis in the catalytic domain of F(1) is coupled via a rotary mechanism of the central stalk subunits to proton translocation. Part of the complex F(1) domain and the central stalk which is part of the complex rotary element. The gamma subunit protrudes into the catalytic domain formed of alpha(3)beta(3). Rotation of the central stalk against the surrounding alpha(3)beta(3) subunits leads to hydrolysis of ATP in three separate catalytic sites on the beta subunits. In Spinacia oleracea (Spinach), this protein is ATP synthase subunit gamma, mitochondrial (ATPC).